The primary structure comprises 279 residues: Conserved oligomeric Golgi complex subunit 7 (279 aa).

Component of the conserved oligomeric Golgi (COG or Sec34/Sec35) complex which consists of eight different proteins COG1-COG8.

It localises to the golgi apparatus membrane. Its function is as follows. Acts as a component of the peripheral membrane COG complex that is involved in intra-Golgi protein trafficking. COG is located at the cis-Golgi, and regulates tethering of retrograde intra-Golgi vesicles and possibly a number of other membrane trafficking events. This chain is Conserved oligomeric Golgi complex subunit 7 (COG7), found in Saccharomyces cerevisiae (strain ATCC 204508 / S288c) (Baker's yeast).